The chain runs to 136 residues: MAGVMETDEQARQRFQLELEFVQCLANPNYLNFLAQRGYLREKPFVNYLKYLLYWKEPEYAKFLKYPHCLHMLELLQYEHFRKELVNAQCAKFIDEQQILHWQHYSRKRTRLQQALAEQQQQQQPQAPSHANTTSK.

The span at 117-128 (AEQQQQQQPQAP) shows a compositional bias: low complexity. Residues 117 to 136 (AEQQQQQQPQAPSHANTTSK) form a disordered region.

Belongs to the Mediator complex subunit 31 family. As to quaternary structure, component of the Mediator complex.

It is found in the nucleus. In terms of biological role, component of the Mediator complex, a coactivator involved in the regulated transcription of nearly all RNA polymerase II-dependent genes. Mediator functions as a bridge to convey information from gene-specific regulatory proteins to the basal RNA polymerase II transcription machinery. Mediator is recruited to promoters by direct interactions with regulatory proteins and serves as a scaffold for the assembly of a functional preinitiation complex with RNA polymerase II and the general transcription factors. This Danio rerio (Zebrafish) protein is Mediator of RNA polymerase II transcription subunit 31 (med31).